The sequence spans 375 residues: Elongation factor Tu (375 aa).

The tr-type G domain occupies 10 to 205 (KPHINVGAIG…TMDKYFVIPE (196 aa)). Positions 19 to 26 (GHVDHGKT) are G1. Position 19–26 (19–26 (GHVDHGKT)) interacts with GTP. T26 contributes to the Mg(2+) binding site. The interval 60–64 (GITIN) is G2. The G3 stretch occupies residues 81–84 (DCPG). GTP-binding positions include 81 to 85 (DCPGH) and 136 to 139 (NKMD). Positions 136 to 139 (NKMD) are G4. Residues 173 to 175 (SAF) form a G5 region.

The protein belongs to the TRAFAC class translation factor GTPase superfamily. Classic translation factor GTPase family. EF-Tu/EF-1A subfamily. In terms of assembly, monomer.

The protein resides in the cytoplasm. It catalyses the reaction GTP + H2O = GDP + phosphate + H(+). Its function is as follows. GTP hydrolase that promotes the GTP-dependent binding of aminoacyl-tRNA to the A-site of ribosomes during protein biosynthesis. This is Elongation factor Tu (tuf) from Spirochaeta aurantia.